We begin with the raw amino-acid sequence, 332 residues long: GTP 3',8-cyclase (332 aa).

A Radical SAM core domain is found at 9 to 220 (GYNRRVDYLR…TQVRERIAER (212 aa)). GTP is bound at residue R18. [4Fe-4S] cluster is bound by residues C25 and C29. Y31 is a binding site for S-adenosyl-L-methionine. C32 is a [4Fe-4S] cluster binding site. A GTP-binding site is contributed by R67. An S-adenosyl-L-methionine-binding site is contributed by G71. T98 serves as a coordination point for GTP. S122 provides a ligand contact to S-adenosyl-L-methionine. K159 lines the GTP pocket. M193 provides a ligand contact to S-adenosyl-L-methionine. [4Fe-4S] cluster-binding residues include C258 and C261. 263-265 (RVR) contributes to the GTP binding site. C275 provides a ligand contact to [4Fe-4S] cluster.

It belongs to the radical SAM superfamily. MoaA family. Monomer and homodimer. [4Fe-4S] cluster is required as a cofactor.

The catalysed reaction is GTP + AH2 + S-adenosyl-L-methionine = (8S)-3',8-cyclo-7,8-dihydroguanosine 5'-triphosphate + 5'-deoxyadenosine + L-methionine + A + H(+). The protein operates within cofactor biosynthesis; molybdopterin biosynthesis. Functionally, catalyzes the cyclization of GTP to (8S)-3',8-cyclo-7,8-dihydroguanosine 5'-triphosphate. This is GTP 3',8-cyclase from Pseudomonas fluorescens (strain Pf0-1).